The sequence spans 462 residues: A-type ATP synthase subunit B (462 aa).

This sequence belongs to the ATPase alpha/beta chains family. As to quaternary structure, has multiple subunits with at least A(3), B(3), C, D, E, F, H, I and proteolipid K(x).

Its subcellular location is the cell membrane. In terms of biological role, component of the A-type ATP synthase that produces ATP from ADP in the presence of a proton gradient across the membrane. The B chain is a regulatory subunit. This chain is A-type ATP synthase subunit B, found in Methanococcus maripaludis (strain DSM 14266 / JCM 13030 / NBRC 101832 / S2 / LL).